A 398-amino-acid chain; its full sequence is Dual-specificity RNA methyltransferase RlmN (398 aa).

Glutamate 121 acts as the Proton acceptor in catalysis. Positions 127–370 constitute a Radical SAM core domain; the sequence is ETDRGTLCVS…VRTPRGRDIL (244 aa). Cysteine 134 and cysteine 373 are disulfide-bonded. Positions 141, 145, and 148 each coordinate [4Fe-4S] cluster. S-adenosyl-L-methionine-binding positions include 199 to 200, serine 231, 253 to 255, and asparagine 330; these read GE and SLH. The active-site S-methylcysteine intermediate is cysteine 373.

Belongs to the radical SAM superfamily. RlmN family. It depends on [4Fe-4S] cluster as a cofactor.

It is found in the cytoplasm. It carries out the reaction adenosine(2503) in 23S rRNA + 2 reduced [2Fe-2S]-[ferredoxin] + 2 S-adenosyl-L-methionine = 2-methyladenosine(2503) in 23S rRNA + 5'-deoxyadenosine + L-methionine + 2 oxidized [2Fe-2S]-[ferredoxin] + S-adenosyl-L-homocysteine. The catalysed reaction is adenosine(37) in tRNA + 2 reduced [2Fe-2S]-[ferredoxin] + 2 S-adenosyl-L-methionine = 2-methyladenosine(37) in tRNA + 5'-deoxyadenosine + L-methionine + 2 oxidized [2Fe-2S]-[ferredoxin] + S-adenosyl-L-homocysteine. Functionally, specifically methylates position 2 of adenine 2503 in 23S rRNA and position 2 of adenine 37 in tRNAs. m2A2503 modification seems to play a crucial role in the proofreading step occurring at the peptidyl transferase center and thus would serve to optimize ribosomal fidelity. This chain is Dual-specificity RNA methyltransferase RlmN, found in Rhodopseudomonas palustris (strain BisB5).